The sequence spans 223 residues: Adenylate kinase 4, mitochondrial (223 aa).

15–20 contacts a ribonucleoside 5'-triphosphate; the sequence is GSGKGT. Positions 35-64 are NMP; that stretch reads SSGHLLRENLKTNTEVGDVAKQYLEKGLLV. Positions 36 and 41 each coordinate AMP. An N6-succinyllysine modification is found at K60. AMP is bound by residues 62 to 64, 89 to 92, and Q96; these read LLV and GFPR. The segment at 125-162 is LID; sequence RRWIHPSSGRVYNLDFNPPQVLGVDDITGEPLVQQEDD. A ribonucleoside 5'-triphosphate is bound by residues R126 and 135 to 136; that span reads VY. R170 provides a ligand contact to AMP. K175 is modified (N6-acetyllysine). N6-acetyllysine; alternate occurs at positions 179 and 186. An N6-succinyllysine; alternate mark is found at K179 and K186. Residue T199 coordinates a ribonucleoside 5'-triphosphate.

The protein belongs to the adenylate kinase family. AK3 subfamily. As to quaternary structure, monomer. Interacts with SLC25A5/ANT2. Expressed in the pyramidal cells in the hippocampus.

Its subcellular location is the mitochondrion matrix. The catalysed reaction is a ribonucleoside 5'-phosphate + ATP = a ribonucleoside 5'-diphosphate + ADP. It catalyses the reaction AMP + ATP = 2 ADP. It carries out the reaction GTP + AMP = GDP + ADP. The enzyme catalyses CMP + ATP = CDP + ADP. The catalysed reaction is GTP + CMP = CDP + GDP. It catalyses the reaction dAMP + ATP = dADP + ADP. It carries out the reaction dCMP + ATP = dCDP + ADP. The enzyme catalyses a 2'-deoxyribonucleoside 5'-diphosphate + ATP = a 2'-deoxyribonucleoside 5'-triphosphate + ADP. The catalysed reaction is a ribonucleoside 5'-diphosphate + ATP = a ribonucleoside 5'-triphosphate + ADP. It catalyses the reaction GDP + ATP = GTP + ADP. It carries out the reaction CDP + GTP = CTP + GDP. The enzyme catalyses CDP + ATP = CTP + ADP. The catalysed reaction is UDP + ATP = UTP + ADP. It catalyses the reaction GTP + UDP = UTP + GDP. It carries out the reaction dADP + GTP = dATP + GDP. The enzyme catalyses dCDP + GTP = dCTP + GDP. The catalysed reaction is dCDP + ATP = dCTP + ADP. It catalyses the reaction dGDP + ATP = dGTP + ADP. It carries out the reaction dTDP + GTP = dTTP + GDP. The enzyme catalyses dTDP + ATP = dTTP + ADP. Functionally, broad-specificity mitochondrial nucleoside phosphate kinase involved in cellular nucleotide homeostasis by catalyzing nucleoside-phosphate interconversions. Similar to other adenylate kinases, preferentially catalyzes the phosphorylation of the nucleoside monophosphate AMP with ATP as phosphate donor to produce ADP. Phosphorylates only AMP when using GTP as phosphate donor. In vitro, can also catalyze the phosphorylation of CMP, dAMP and dCMP and use GTP as an alternate phosphate donor. Moreover, exhibits a diphosphate kinase activity, producing ATP, CTP, GTP, UTP, TTP, dATP, dCTP and dGTP from the corresponding diphosphate substrates with either ATP or GTP as phosphate donors. Plays a role in controlling cellular ATP levels by regulating phosphorylation and activation of the energy sensor protein kinase AMPK. Plays a protective role in the cellular response to oxidative stress. This is Adenylate kinase 4, mitochondrial from Rattus norvegicus (Rat).